The primary structure comprises 207 residues: ATP-dependent Clp protease proteolytic subunit (207 aa).

Ser112 serves as the catalytic Nucleophile. His137 is a catalytic residue.

It belongs to the peptidase S14 family. As to quaternary structure, fourteen ClpP subunits assemble into 2 heptameric rings which stack back to back to give a disk-like structure with a central cavity, resembling the structure of eukaryotic proteasomes.

The protein localises to the cytoplasm. The enzyme catalyses Hydrolysis of proteins to small peptides in the presence of ATP and magnesium. alpha-casein is the usual test substrate. In the absence of ATP, only oligopeptides shorter than five residues are hydrolyzed (such as succinyl-Leu-Tyr-|-NHMec, and Leu-Tyr-Leu-|-Tyr-Trp, in which cleavage of the -Tyr-|-Leu- and -Tyr-|-Trp bonds also occurs).. Its function is as follows. Cleaves peptides in various proteins in a process that requires ATP hydrolysis. Has a chymotrypsin-like activity. Plays a major role in the degradation of misfolded proteins. The sequence is that of ATP-dependent Clp protease proteolytic subunit from Bacteroides fragilis (strain ATCC 25285 / DSM 2151 / CCUG 4856 / JCM 11019 / LMG 10263 / NCTC 9343 / Onslow / VPI 2553 / EN-2).